The following is a 227-amino-acid chain: Cytochrome c oxidase subunit 2 (227 aa).

The Mitochondrial intermembrane segment spans residues 1 to 14 (MAYPFQLGLQDATS). The helical transmembrane segment at 15-45 (PIMEELTNFHDHTLMIVFLISSLVLYIISSM) threads the bilayer. At 46–59 (LATKMTHTSTMDAQ) the chain is on the mitochondrial matrix side. Residues 60 to 87 (SMETIWTILPAVILVLIALPSLRILYMM) form a helical membrane-spanning segment. Topologically, residues 88 to 227 (DEINNPVLTV…FFENWSASMI (140 aa)) are mitochondrial intermembrane. Cu cation contacts are provided by His161, Cys196, Glu198, Cys200, His204, and Met207. Glu198 lines the Mg(2+) pocket.

Belongs to the cytochrome c oxidase subunit 2 family. Component of the cytochrome c oxidase (complex IV, CIV), a multisubunit enzyme composed of 14 subunits. The complex is composed of a catalytic core of 3 subunits MT-CO1, MT-CO2 and MT-CO3, encoded in the mitochondrial DNA, and 11 supernumerary subunits COX4I, COX5A, COX5B, COX6A, COX6B, COX6C, COX7A, COX7B, COX7C, COX8 and NDUFA4, which are encoded in the nuclear genome. The complex exists as a monomer or a dimer and forms supercomplexes (SCs) in the inner mitochondrial membrane with NADH-ubiquinone oxidoreductase (complex I, CI) and ubiquinol-cytochrome c oxidoreductase (cytochrome b-c1 complex, complex III, CIII), resulting in different assemblies (supercomplex SCI(1)III(2)IV(1) and megacomplex MCI(2)III(2)IV(2)). Found in a complex with TMEM177, COA6, COX18, COX20, SCO1 and SCO2. Interacts with TMEM177 in a COX20-dependent manner. Interacts with COX20. Interacts with COX16. Cu cation serves as cofactor.

The protein resides in the mitochondrion inner membrane. It catalyses the reaction 4 Fe(II)-[cytochrome c] + O2 + 8 H(+)(in) = 4 Fe(III)-[cytochrome c] + 2 H2O + 4 H(+)(out). Its function is as follows. Component of the cytochrome c oxidase, the last enzyme in the mitochondrial electron transport chain which drives oxidative phosphorylation. The respiratory chain contains 3 multisubunit complexes succinate dehydrogenase (complex II, CII), ubiquinol-cytochrome c oxidoreductase (cytochrome b-c1 complex, complex III, CIII) and cytochrome c oxidase (complex IV, CIV), that cooperate to transfer electrons derived from NADH and succinate to molecular oxygen, creating an electrochemical gradient over the inner membrane that drives transmembrane transport and the ATP synthase. Cytochrome c oxidase is the component of the respiratory chain that catalyzes the reduction of oxygen to water. Electrons originating from reduced cytochrome c in the intermembrane space (IMS) are transferred via the dinuclear copper A center (CU(A)) of subunit 2 and heme A of subunit 1 to the active site in subunit 1, a binuclear center (BNC) formed by heme A3 and copper B (CU(B)). The BNC reduces molecular oxygen to 2 water molecules using 4 electrons from cytochrome c in the IMS and 4 protons from the mitochondrial matrix. The polypeptide is Cytochrome c oxidase subunit 2 (MT-CO2) (Acomys wilsoni (Wilson's spiny mouse)).